We begin with the raw amino-acid sequence, 685 residues long: ATP-dependent zinc metalloprotease FTSH 8, chloroplastic (685 aa).

The transit peptide at 1-37 (MAASSACLLGNGLSVYTTKQRFQKLGLDRTSKVTVVK) directs the protein to the chloroplast. The N-terminal 36 residues, 38 to 73 (ASLDEKKHEGRRGFFKLLLGNAAAGVGLLASGNANA), are a transit peptide targeting the thylakoid. Topologically, residues 38–161 (ASLDEKKHEG…HNAQEDQGSP (124 aa)) are lumenal, thylakoid. A helical membrane pass occupies residues 162–182 (ILNLIGNLAFPVILIGGLFLL). The Stromal portion of the chain corresponds to 183-685 (SRRSSGGMGG…STSTPTPASV (503 aa)). Residue 260-267 (GPPGTGKT) participates in ATP binding. Zn(2+) is bound at residue His-481. Glu-482 is an active-site residue. His-485 and Asp-559 together coordinate Zn(2+).

In the N-terminal section; belongs to the AAA ATPase family. The protein in the C-terminal section; belongs to the peptidase M41 family. Heterohexamers with FTSH1, FTSH2 and FTSH5. May also form homooligomers. Requires Zn(2+) as cofactor. In terms of tissue distribution, expressed in cotyledons, cauline and rosette leaves, stems, sepals, flovers and siliques. Very low in roots.

It localises to the plastid. The protein localises to the chloroplast thylakoid membrane. Its function is as follows. Part of a complex that function as an ATP-dependent zinc metallopeptidase. Involved in the thylakoid formation and in the removal of damaged D1 in the photosystem II, preventing cell death under high-intensity light conditions. The chain is ATP-dependent zinc metalloprotease FTSH 8, chloroplastic (FTSH8) from Arabidopsis thaliana (Mouse-ear cress).